The sequence spans 129 residues: Trefoil factor 2 (129 aa).

The first 23 residues, 1-23, serve as a signal peptide directing secretion; sequence MGPRGAPLLVVVLVLGLHALAEG. P-type domains follow at residues 29–73 and 79–122; these read CRCS…FHPL and EQCV…FFPQ. Cystine bridges form between Cys-29–Cys-127, Cys-31–Cys-58, Cys-42–Cys-57, Cys-52–Cys-69, Cys-81–Cys-107, Cys-91–Cys-106, and Cys-101–Cys-118.

In terms of tissue distribution, expressed in the digestive tract, where it was found predominantly in the stomach with highest expression in the antrum. It is secreted predominantly from antral mucous cells into the lumen of the gastrointestinal tract.

It is found in the secreted. Inhibits gastrointestinal motility and gastric acid secretion. Could function as a structural component of gastric mucus, possibly by stabilizing glycoproteins in the mucus gel through interactions with carbohydrate side chains. The sequence is that of Trefoil factor 2 (Tff2) from Rattus norvegicus (Rat).